A 729-amino-acid polypeptide reads, in one-letter code: E3 ubiquitin-protein ligase Trim36 (729 aa).

The RING-type; degenerate zinc finger occupies 33–84 (CPACKELFTHPLILPCQHSVCHKCVKELLLSLDDSFNDVASDSSNQSSPRLR). 2 B box-type zinc fingers span residues 154–192 (AIMCDLCKPPPQESTKSCMDCSASYCNECFKIYHPWGTV) and 207–249 (PKVL…VTTM). Residues Cys212, His215, Cys235, and His241 each coordinate Zn(2+). Positions 271 to 302 (ESQVKSQISELNLLMKETECNGERAKEEALAH) form a coiled coil. Residues 356–413 (LKETDQSCFVQTAKQLHLRIQKATESLKSFRPAAQASFEDYVVNISKQTEVLGELSFF) enclose the COS domain. Residues 416-511 (GIDIPEINEE…RELILHTPPA (96 aa)) enclose the Fibronectin type-III domain. The B30.2/SPRY domain occupies 509 to 723 (PPAPVFSFLF…LEEAITAKYL (215 aa)). A disordered region spans residues 606–626 (RDAASPRYEQDSGHDSGSEDA). Over residues 613-622 (YEQDSGHDSG) the composition is skewed to basic and acidic residues.

This sequence belongs to the TRIM/RBCC family. Interacts with CENPH. In terms of tissue distribution, expressed in testis. Strongly expressed in the neural tube region in 14.5 dpc embryos.

The protein resides in the cytoplasm. It is found in the cytoplasmic vesicle. Its subcellular location is the secretory vesicle. It localises to the acrosome. The protein localises to the cytoskeleton. It carries out the reaction S-ubiquitinyl-[E2 ubiquitin-conjugating enzyme]-L-cysteine + [acceptor protein]-L-lysine = [E2 ubiquitin-conjugating enzyme]-L-cysteine + N(6)-ubiquitinyl-[acceptor protein]-L-lysine.. E3 ubiquitin-protein ligase which mediates ubiquitination and subsequent proteasomal degradation of target proteins. Involved in chromosome segregation and cell cycle regulation. May play a role in the acrosome reaction and fertilization. The chain is E3 ubiquitin-protein ligase Trim36 (Trim36) from Mus musculus (Mouse).